We begin with the raw amino-acid sequence, 257 residues long: Imidazole glycerol phosphate synthase subunit HisF (257 aa).

Catalysis depends on residues Asp-12 and Asp-131.

Belongs to the HisA/HisF family. Heterodimer of HisH and HisF.

The protein resides in the cytoplasm. The catalysed reaction is 5-[(5-phospho-1-deoxy-D-ribulos-1-ylimino)methylamino]-1-(5-phospho-beta-D-ribosyl)imidazole-4-carboxamide + L-glutamine = D-erythro-1-(imidazol-4-yl)glycerol 3-phosphate + 5-amino-1-(5-phospho-beta-D-ribosyl)imidazole-4-carboxamide + L-glutamate + H(+). It participates in amino-acid biosynthesis; L-histidine biosynthesis; L-histidine from 5-phospho-alpha-D-ribose 1-diphosphate: step 5/9. Its function is as follows. IGPS catalyzes the conversion of PRFAR and glutamine to IGP, AICAR and glutamate. The HisF subunit catalyzes the cyclization activity that produces IGP and AICAR from PRFAR using the ammonia provided by the HisH subunit. This is Imidazole glycerol phosphate synthase subunit HisF from Marinobacter nauticus (strain ATCC 700491 / DSM 11845 / VT8) (Marinobacter aquaeolei).